Here is a 193-residue protein sequence, read N- to C-terminus: Ion-translocating oxidoreductase complex subunit A (193 aa).

6 helical membrane passes run 5-25 (LLLFVGTVLVNNFVLVKFLGL), 39-59 (IGMGLATTFVLTLASVCAWMV), 62-82 (FILLPLGLVYLRTLAFILVIA), 102-122 (LLGIFLPLITTNCAVLGVALL), 134-154 (AVYGFSAAAGFSLVMVLFAAI), and 171-191 (SIALITAGLMSLAFMGFTGLV).

It belongs to the NqrDE/RnfAE family. In terms of assembly, the complex is composed of six subunits: RnfA, RnfB, RnfC, RnfD, RnfE and RnfG.

It is found in the cell inner membrane. Its function is as follows. Part of a membrane-bound complex that couples electron transfer with translocation of ions across the membrane. The protein is Ion-translocating oxidoreductase complex subunit A of Yersinia enterocolitica serotype O:8 / biotype 1B (strain NCTC 13174 / 8081).